Consider the following 550-residue polypeptide: MDIKRTVLWVIFFMSAVMLFDNWQRDHGRPSMFFPSATQTKTAAPAAPGSSTTASQPTDLPQTTAAAPGSTTPAAQQAQLVSFSTDVYRGQIDTRGGTLSKLTLVKPGEGKQPDQVITLFDHTADHTYLARTGLLGGDFPNHTDVFTPVAGQATDMTGNTLTLSFQSPEKGGLKVVKTYTFTRGSYVINVDTKIQNVGTAPVKPTAYMELVRDSQPVETPRFSHTFIGPAVYTEQHHFQKLTFGDIDKNKQDYATSADNGWVAMVQHYFASAWIPQQGAKRDIYVEKIDPSLYRVGVKQPLQTIAPGQTIDVSARLFAGPEEERMLEGIAPGLELVKDYGWVTIIAKPLFWLLEKIHGYVGNWGWAIVLLTLLIKAVFFPLSAASYKSMARMKEITPRMQALRERFKSDPQKMNAALMELYKTEKVNPFGGCLPVVIQIPVFISLYWVLLSSVEMRGAPWILWIHDLSQQDPYFILPVLMAVSMFVQTKLNPTPPDPVQAKMMMFMPIAFSVMFFFFPAGLVLYYVVNNVLSIAQQYYITRMMGQKKKAA.

Residues I3 to W23 traverse the membrane as a helical segment. Residues F34 to P73 form a disordered region. The segment covering P35–P73 has biased composition (low complexity). Helical transmembrane passes span W363–A383, F429–L449, P472–P492, and M503–L523.

The protein belongs to the OXA1/ALB3/YidC family. Type 1 subfamily. In terms of assembly, interacts with the Sec translocase complex via SecD. Specifically interacts with transmembrane segments of nascent integral membrane proteins during membrane integration.

The protein localises to the cell inner membrane. Required for the insertion and/or proper folding and/or complex formation of integral membrane proteins into the membrane. Involved in integration of membrane proteins that insert both dependently and independently of the Sec translocase complex, as well as at least some lipoproteins. Aids folding of multispanning membrane proteins. The chain is Membrane protein insertase YidC from Paraburkholderia phymatum (strain DSM 17167 / CIP 108236 / LMG 21445 / STM815) (Burkholderia phymatum).